The chain runs to 73 residues: Putative membrane protein insertion efficiency factor (73 aa).

It belongs to the UPF0161 family.

Its subcellular location is the cell inner membrane. In terms of biological role, could be involved in insertion of integral membrane proteins into the membrane. The sequence is that of Putative membrane protein insertion efficiency factor from Jannaschia sp. (strain CCS1).